We begin with the raw amino-acid sequence, 144 residues long: Snaclec 6 (144 aa).

The first 23 residues, 1-23 (MGRFISVSFGLLVVFLSLSGTGA), serve as a signal peptide directing secretion. Intrachain disulfides connect C25–C36, C53–C142, and C119–C134. Positions 32 to 143 (HEGHCYKVFK…CNFIAPVVCK (112 aa)) constitute a C-type lectin domain.

This sequence belongs to the snaclec family. As to quaternary structure, heterodimer; disulfide-linked.

Its subcellular location is the secreted. In terms of biological role, interferes with one step of hemostasis (modulation of platelet aggregation, or coagulation cascade, for example). The polypeptide is Snaclec 6 (Daboia siamensis (Eastern Russel's viper)).